The primary structure comprises 351 residues: Ion-translocating oxidoreductase complex subunit D (351 aa).

Transmembrane regions (helical) follow at residues 18–38, 40–60, 87–107, and 121–141; these read IMLL…YFFG, GSLI…GAVL, LPPL…IVIA, and PAMV…TSWL. Thr-185 carries the FMN phosphoryl threonine modification. 5 helical membrane passes run 211 to 231, 241 to 261, 264 to 284, 298 to 318, and 320 to 340; these read VLAG…GLLL, IPVS…MIAP, FASP…FFIA, LIFG…GGYP, and GVAF…HYTQ.

This sequence belongs to the NqrB/RnfD family. As to quaternary structure, the complex is composed of six subunits: RnfA, RnfB, RnfC, RnfD, RnfE and RnfG. Requires FMN as cofactor.

The protein localises to the cell inner membrane. Part of a membrane-bound complex that couples electron transfer with translocation of ions across the membrane. The protein is Ion-translocating oxidoreductase complex subunit D of Yersinia pseudotuberculosis serotype I (strain IP32953).